We begin with the raw amino-acid sequence, 448 residues long: Microtubule-associated protein tau (448 aa).

Over residues 1-16 (MAEPRQEFDVMEDHAQ) the composition is skewed to basic and acidic residues. The tract at residues 1 to 264 (MAEPRQEFDV…GPMPDLKNVK (264 aa)) is disordered. An N-acetylalanine modification is found at Ala2. Residue Tyr19 is modified to Phosphotyrosine. Lys33 is covalently cross-linked (Glycyl lysine isopeptide (Lys-Gly) (interchain with G-Cter in ubiquitin)). Phosphoserine is present on residues Ser35 and Ser50. Residues 50–60 (SETSDAKSTPT) are compositionally biased toward polar residues. A phosphothreonine mark is found at Thr58 and Thr60. Low complexity predominate over residues 71-89 (EGAPGEQAAAQAPAEIPEG). Thr100 is subject to Phosphothreonine. Positions 119–135 (KGKDGTGPDDKKTKGAD) are enriched in basic and acidic residues. Thr144 carries the post-translational modification Phosphothreonine. Residue Arg146 is modified to Omega-N-methylarginine. Residue Lys154 is modified to N6,N6-dimethyllysine; alternate. Residue Lys154 is modified to N6-acetyllysine; alternate. A phosphothreonine mark is found at Thr160, Thr166, Thr167, and Thr172. The segment covering 163 to 176 (PAKTTPTPKTSPAT) has biased composition (low complexity). Basic and acidic residues predominate over residues 189–200 (KSERGESGKSGD). Ser198 and Ser202 each carry phosphoserine. The segment covering 201-221 (RSGYSSPGSPGTPGSRSRTPS) has biased composition (low complexity). Phosphotyrosine is present on Tyr204. Residues Ser205, Ser206, and Ser209 each carry the phosphoserine modification. Residues Thr212 and Thr219 each carry the phosphothreonine modification. Position 221 is a phosphoserine (Ser221). A Phosphothreonine modification is found at Thr224. Lys232 carries the N6-acetyllysine modification. Thr238 is modified (phosphothreonine). 2 positions are modified to phosphoserine: Ser242 and Ser244. 4 Tau/MAP repeats span residues 251–281 (QAAP…GGGK), 282–312 (VQII…GGGS), 313–343 (VQIV…GGGQ), and 344–375 (VEVK…GGGN). Lys261 participates in a covalent cross-link: Glycyl lysine isopeptide (Lys-Gly) (interchain with G-Cter in ubiquitin). Lys266 is modified (N6-acetyllysine; alternate). Lys266 carries the post-translational modification N6-methyllysine; alternate. Lys266 participates in a covalent cross-link: Glycyl lysine isopeptide (Lys-Gly) (interchain with G-Cter in ubiquitin); alternate. Position 269 is a phosphoserine (Ser269). Lys274 participates in a covalent cross-link: Glycyl lysine isopeptide (Lys-Gly) (interchain with G-Cter in ubiquitin). An N6-acetyllysine; alternate modification is found at Lys288. Lys288 participates in a covalent cross-link: Glycyl lysine isopeptide (Lys-Gly) (interchain with G-Cter in ubiquitin); alternate. 2 positions are modified to phosphoserine: Ser292 and Ser296. Lys297 is modified (N6-acetyllysine). An intrachain disulfide couples Cys298 to Cys329. Ser300 is subject to Phosphoserine. N6-acetyllysine; alternate is present on Lys305. Lys305 is covalently cross-linked (Glycyl lysine isopeptide (Lys-Gly) (interchain with G-Cter in ubiquitin); alternate). At Ser312 the chain carries Phosphoserine. Position 318 is an N6,N6-dimethyllysine; alternate (Lys318). 3 positions are modified to N6-acetyllysine; alternate: Lys318, Lys324, and Lys328. Glycyl lysine isopeptide (Lys-Gly) (interchain with G-Cter in ubiquitin); alternate cross-links involve residues Lys318, Lys324, and Lys328. Residue Ser331 is modified to Phosphoserine. N6-acetyllysine; alternate occurs at positions 338, 350, and 354. Glycyl lysine isopeptide (Lys-Gly) (interchain with G-Cter in ubiquitin); alternate cross-links involve residues Lys338, Lys350, and Lys354. Arg356 is modified (omega-N-methylarginine). Ser359 is modified (phosphoserine). A Glycyl lysine isopeptide (Lys-Gly) (interchain with G-Cter in ubiquitin) cross-link involves residue Lys360. Ser363 carries the phosphoserine modification. Lys376 carries the N6-acetyllysine; alternate modification. A Glycyl lysine isopeptide (Lys-Gly) (interchain with G-Cter in ubiquitin); alternate cross-link involves residue Lys376. Lys382 participates in a covalent cross-link: Glycyl lysine isopeptide (Lys-Gly) (interchain with G-Cter in ubiquitin). Residue Lys392 is modified to N6-acetyllysine; alternate. A Glycyl lysine isopeptide (Lys-Gly) (interchain with G-Cter in ubiquitin); alternate cross-link involves residue Lys392. Tyr401 is subject to Phosphotyrosine. Phosphoserine is present on residues Ser403 and Ser407. A disordered region spans residues 405–424 (VVSGDTSPRHLSNVSSTGSI). A compositionally biased stretch (polar residues) spans 408-423 (GDTSPRHLSNVSSTGS). Thr410 carries the phosphothreonine modification. Residues Ser411, Ser416, Ser423, and Ser429 each carry the phosphoserine modification. Position 434 is a phosphothreonine (Thr434).

In terms of assembly, interacts with MARK1, MARK2, MARK3 and MARK4. Interacts with SQSTM1 when polyubiquitinated. Interacts with PSMC2 through SQSTM1. Interacts with FKBP4. Binds to CSNK1D. Interacts with SGK1. Interacts with PIN1. Interacts with LRRK2. Interacts with LRP1, leading to endocytosis; this interaction is reduced in the presence of LRPAP1/RAP. In terms of processing, polyubiquitinated. Requires functional TRAF6 and may provoke SQSTM1-dependent degradation by the proteasome. Phosphorylation at various serine and threonine residues in S-P or T-P motifs by proline-directed protein kinases (PDPK1, CDK1, CDK5, GSK3, MAPK) (a few sites per protein in interphase, more in mitosis), and at serine residues in K-X-G-S motifs by MAP/microtubule affinity-regulating kinase (MARK1, MARK2, MARK3, MARK4), causing detachment from microtubules, and their disassembly. Phosphorylation at Ser-269 by BRSK1 and BRSK2 in neurons affects ability to bind microtubules and plays a role in neuron polarization. Phosphorylated by PHK. Dephosphorylation at several serine and threonine residues by the serine/threonine phosphatase PPP5C. Post-translationally, O-glycosylated; contains at least 4 GlcNAc. Site-specific or stoichiometric changes in glycosylation may modulate tau function and also play a role in PHF's formation. Expressed in neurons.

The protein resides in the cytoplasm. The protein localises to the cytosol. Its subcellular location is the cell membrane. It localises to the cytoskeleton. It is found in the cell projection. The protein resides in the axon. The protein localises to the dendrite. Its subcellular location is the secreted. Promotes microtubule assembly and stability, and might be involved in the establishment and maintenance of neuronal polarity. The C-terminus binds axonal microtubules while the N-terminus binds neural plasma membrane components, suggesting that tau functions as a linker protein between both. Axonal polarity is predetermined by tau localization (in the neuronal cell) in the domain of the cell body defined by the centrosome. The short isoforms allow plasticity of the cytoskeleton whereas the longer isoforms may preferentially play a role in its stabilization. This is Microtubule-associated protein tau (MAPT) from Bos taurus (Bovine).